Reading from the N-terminus, the 154-residue chain is 6,7-dimethyl-8-ribityllumazine synthase (154 aa).

Residues Phe22, 57–59 (AYE), and 81–83 (AVI) contribute to the 5-amino-6-(D-ribitylamino)uracil site. Residue 86–87 (GT) coordinates (2S)-2-hydroxy-3-oxobutyl phosphate. The Proton donor role is filled by His89. A 5-amino-6-(D-ribitylamino)uracil-binding site is contributed by Phe114. Arg128 contributes to the (2S)-2-hydroxy-3-oxobutyl phosphate binding site.

The protein belongs to the DMRL synthase family. Forms an icosahedral capsid composed of 60 subunits, arranged as a dodecamer of pentamers.

It catalyses the reaction (2S)-2-hydroxy-3-oxobutyl phosphate + 5-amino-6-(D-ribitylamino)uracil = 6,7-dimethyl-8-(1-D-ribityl)lumazine + phosphate + 2 H2O + H(+). The protein operates within cofactor biosynthesis; riboflavin biosynthesis; riboflavin from 2-hydroxy-3-oxobutyl phosphate and 5-amino-6-(D-ribitylamino)uracil: step 1/2. Its function is as follows. Catalyzes the formation of 6,7-dimethyl-8-ribityllumazine by condensation of 5-amino-6-(D-ribitylamino)uracil with 3,4-dihydroxy-2-butanone 4-phosphate. This is the penultimate step in the biosynthesis of riboflavin. This is 6,7-dimethyl-8-ribityllumazine synthase from Idiomarina loihiensis (strain ATCC BAA-735 / DSM 15497 / L2-TR).